A 427-amino-acid polypeptide reads, in one-letter code: MPALVLLGAQWGDEGKGKATDLLGGSVDYVVRYQGGNNAGHTVVVGDQKYALHLLPSGILSPGCTPVIGNGVVVDPAVLLSELSGLNERGVDTSKLLISGNAHLITPYNVTLDKVTERFLGKRKIGTTGRGIGPTYADKINRVGIRVQDLYDESILEQKVEAALEQKNQLLAKVFNRRAIEAGKVVEDMLQYAEQIKPFVADTTLILNDAIDEGKVVLFEGGQGTLLDVDHGTYPFVTSSNPTAGGACTGAGVGPTKISRVIGILKAYTTRVGAGPFPTELHDEDGEALRRIGGERGVTTGRDRRCGWFDAPIARYATRVNGLTDFFLTKLDVLTGWERIPVCVAYEIDGKRVEELPYNQTDFHHAKPIYENLPGWSEDITKAKTFSDLPKNAQAYVKALEEMSGAPISAIGVGPGRTETIEINSFL.

Residues 12 to 18 (GDEGKGK) and 40 to 42 (GHT) each bind GTP. The active-site Proton acceptor is the D13. Mg(2+)-binding residues include D13 and G40. Residues 13-16 (DEGK), 38-41 (NAGH), T128, R142, Q223, T238, and R302 contribute to the IMP site. Residue H41 is the Proton donor of the active site. Substrate is bound at residue 298–304 (VTTGRDR). GTP-binding positions include R304, 330-332 (KLD), and 412-414 (GVG).

This sequence belongs to the adenylosuccinate synthetase family. Homodimer. Mg(2+) serves as cofactor.

It is found in the cytoplasm. The catalysed reaction is IMP + L-aspartate + GTP = N(6)-(1,2-dicarboxyethyl)-AMP + GDP + phosphate + 2 H(+). Its pathway is purine metabolism; AMP biosynthesis via de novo pathway; AMP from IMP: step 1/2. Plays an important role in the de novo pathway of purine nucleotide biosynthesis. Catalyzes the first committed step in the biosynthesis of AMP from IMP. The chain is Adenylosuccinate synthetase from Streptomyces griseus subsp. griseus (strain JCM 4626 / CBS 651.72 / NBRC 13350 / KCC S-0626 / ISP 5235).